The sequence spans 120 residues: SAGA-associated factor 11 (120 aa).

Residues 40–60 show a composition bias toward low complexity; the sequence is SLLNSSNSNTNSNTNGTIASN. Residues 40–82 form a disordered region; the sequence is SLLNSSNSNTNSNTNGTIASNGGNGTTSDENNEIENSTIQDKS. The SGF11-type zinc-finger motif lies at 93-114; it reads FRCLNCGRNIAGGRFASHISKC.

Belongs to the SGF11 family. Component of the 1.8 MDa SAGA transcription coactivator-HAT complex. SAGA is built of 5 distinct domains with specialized functions. Within the SAGA complex, SUS1, SGF11, SGF73 and UBP8 form an additional subcomplex of SAGA called the DUB module (deubiquitination module). Interacts directly with SGF73, SUS1 and UBP8.

It localises to the nucleus. Functionally, functions as a component of the transcription regulatory histone acetylation (HAT) complex SAGA. At the promoters, SAGA is required for recruitment of the basal transcription machinery. It influences RNA polymerase II transcriptional activity through different activities such as TBP interaction and promoter selectivity, interaction with transcription activators, and chromatin modification through histone acetylation and deubiquitination. SAGA acetylates nucleosomal histone H3 to some extent (to form H3K9ac, H3K14ac, H3K18ac and H3K23ac). SAGA interacts with DNA via upstream activating sequences (UASs). Involved in transcriptional regulation of a subset of SAGA-regulated genes. Within the SAGA complex, participates in a subcomplex, that specifically deubiquitinates histones H2B. The sequence is that of SAGA-associated factor 11 from Candida albicans (strain SC5314 / ATCC MYA-2876) (Yeast).